The primary structure comprises 315 residues: Small ribosomal subunit biogenesis GTPase RsgA (315 aa).

The CP-type G domain occupies 79–243; it reads LSKESHILGA…LIDTPGIKGF (165 aa). GTP contacts are provided by residues 128 to 131 and 182 to 190; these read NKID and GHSGVGKSS. 4 residues coordinate Zn(2+): C267, C272, H274, and C280.

It belongs to the TRAFAC class YlqF/YawG GTPase family. RsgA subfamily. As to quaternary structure, monomer. Associates with 30S ribosomal subunit, binds 16S rRNA. Zn(2+) is required as a cofactor.

It localises to the cytoplasm. Functionally, one of several proteins that assist in the late maturation steps of the functional core of the 30S ribosomal subunit. Helps release RbfA from mature subunits. May play a role in the assembly of ribosomal proteins into the subunit. Circularly permuted GTPase that catalyzes slow GTP hydrolysis, GTPase activity is stimulated by the 30S ribosomal subunit. This Porphyromonas gingivalis (strain ATCC BAA-308 / W83) protein is Small ribosomal subunit biogenesis GTPase RsgA.